The following is a 440-amino-acid chain: uncharacterized protein (440 aa).

Positions 1–17 (MDRFFCTVWVWSVLFGA) are cleaved as a signal peptide. A lipid anchor (N-palmitoyl cysteine) is attached at Cys18. Cys18 carries S-diacylglycerol cysteine lipidation. The interval 241–268 (SALQERPSSPEPVVSTIPSPEGEENSAA) is disordered.

The protein localises to the cell membrane. This is an uncharacterized protein from Treponema pallidum (strain Nichols).